The following is a 278-amino-acid chain: ATP synthase subunit delta (278 aa).

This sequence belongs to the ATPase delta chain family. F-type ATPases have 2 components, F(1) - the catalytic core - and F(0) - the membrane proton channel. F(1) has five subunits: alpha(3), beta(3), gamma(1), delta(1), epsilon(1). F(0) has three main subunits: a(1), b(2) and c(10-14). The alpha and beta chains form an alternating ring which encloses part of the gamma chain. F(1) is attached to F(0) by a central stalk formed by the gamma and epsilon chains, while a peripheral stalk is formed by the delta and b chains.

Its subcellular location is the cell membrane. F(1)F(0) ATP synthase produces ATP from ADP in the presence of a proton or sodium gradient. F-type ATPases consist of two structural domains, F(1) containing the extramembraneous catalytic core and F(0) containing the membrane proton channel, linked together by a central stalk and a peripheral stalk. During catalysis, ATP synthesis in the catalytic domain of F(1) is coupled via a rotary mechanism of the central stalk subunits to proton translocation. Its function is as follows. This protein is part of the stalk that links CF(0) to CF(1). It either transmits conformational changes from CF(0) to CF(1) or is implicated in proton conduction. The protein is ATP synthase subunit delta of Bifidobacterium longum (strain DJO10A).